The chain runs to 138 residues: Venom allergen 2 (138 aa).

The first 19 residues, 1 to 19, serve as a signal peptide directing secretion; it reads MKSFVLATCLLGFAQIIYA. Intrachain disulfides connect Cys34-Cys57, Cys81-Cys94, and Cys101-Cys122.

The protein belongs to the ant venom allergen 2/4 family. As to quaternary structure, homodimer; disulfide-linked. As to expression, expressed by the venom gland.

Its subcellular location is the secreted. The polypeptide is Venom allergen 2 (Solenopsis invicta (Red imported fire ant)).